Reading from the N-terminus, the 627-residue chain is (-)-alpha-pinene synthase 2, chloroplastic (627 aa).

The transit peptide at 1-36 directs the protein to the chloroplast; sequence MALVSVAPMASRSCLHKSLSSSAHELKTICRTIPTL. Positions 378, 382, and 530 each coordinate Mg(2+). The DDXXD motif motif lies at 378 to 382; it reads DDMYD.

It belongs to the terpene synthase family. Tpsd subfamily. The cofactor is Mg(2+). It depends on Mn(2+) as a cofactor.

Its subcellular location is the plastid. The protein resides in the chloroplast. The catalysed reaction is (2E)-geranyl diphosphate = (1S,5S)-alpha-pinene + diphosphate. It catalyses the reaction (2E)-geranyl diphosphate = (1S,5S)-beta-pinene + diphosphate. It functions in the pathway terpene metabolism; oleoresin biosynthesis. Functionally, involved in defensive oleoresin formation in conifers in response to insect attack or other injury. Involved in monoterpene (C10) olefins biosynthesis. A mixture of alpha- and beta-pinene (35:10) is produced by this enzyme. This chain is (-)-alpha-pinene synthase 2, chloroplastic, found in Picea sitchensis (Sitka spruce).